The primary structure comprises 73 residues: Large ribosomal subunit protein uL24 (73 aa).

Over residues 51 to 65 the composition is skewed to basic and acidic residues; the sequence is DDNPKGGFIHKEKPM. The tract at residues 51-73 is disordered; sequence DDNPKGGFIHKEKPMHISNVKKA.

The protein belongs to the universal ribosomal protein uL24 family. Part of the 50S ribosomal subunit.

One of two assembly initiator proteins, it binds directly to the 5'-end of the 23S rRNA, where it nucleates assembly of the 50S subunit. In terms of biological role, one of the proteins that surrounds the polypeptide exit tunnel on the outside of the subunit. The protein is Large ribosomal subunit protein uL24 of Helicobacter acinonychis (strain Sheeba).